The sequence spans 430 residues: Tol-Pal system protein TolB (430 aa).

An N-terminal signal peptide occupies residues 1–26 (MSLMTKLGLRALVASCLIAAGGAAHA).

Belongs to the TolB family. The Tol-Pal system is composed of five core proteins: the inner membrane proteins TolA, TolQ and TolR, the periplasmic protein TolB and the outer membrane protein Pal. They form a network linking the inner and outer membranes and the peptidoglycan layer.

It is found in the periplasm. Functionally, part of the Tol-Pal system, which plays a role in outer membrane invagination during cell division and is important for maintaining outer membrane integrity. This is Tol-Pal system protein TolB from Paraburkholderia phymatum (strain DSM 17167 / CIP 108236 / LMG 21445 / STM815) (Burkholderia phymatum).